The primary structure comprises 302 residues: MTNISLDKLVTESRNENTKDIDRVETLEMLKMINDEDKKVAEAVEKELINIAKAVDKIGESFLNGGRLIYVGAGTSGRLGVLDASECPPTYGVSYDLVRGIIAGGESAMFKAREGAEDSKKLCIKDLKNVNFGENDILVGIAASGRTPYVIGGLEYANGIGATTISVTCNPESEMSKIANISIAPVVGPEAITGSTRMKAGTAQKMVLNMLSTGAMVKTGKVYGNLMVDLKATNEKLVERAKRIVMQATGSKREQVEKILKETNFDVKLSIFMIESSLDKIKAKEILDKNKGYIVEAIKEIS.

The 164-residue stretch at 58–221 (IGESFLNGGR…STGAMVKTGK (164 aa)) folds into the SIS domain. Glu-86 functions as the Proton donor in the catalytic mechanism. Glu-117 is a catalytic residue.

Belongs to the GCKR-like family. MurNAc-6-P etherase subfamily. As to quaternary structure, homodimer.

The catalysed reaction is N-acetyl-D-muramate 6-phosphate + H2O = N-acetyl-D-glucosamine 6-phosphate + (R)-lactate. It functions in the pathway amino-sugar metabolism; N-acetylmuramate degradation. Functionally, specifically catalyzes the cleavage of the D-lactyl ether substituent of MurNAc 6-phosphate, producing GlcNAc 6-phosphate and D-lactate. This is N-acetylmuramic acid 6-phosphate etherase from Clostridium botulinum (strain Okra / Type B1).